Here is a 536-residue protein sequence, read N- to C-terminus: Testis-specific protein 10-interacting protein (536 aa).

Disordered regions lie at residues 1–94 (MLNT…LFSS), 185–234 (SQGL…PGQG), and 246–305 (MEEE…FKGP). A compositionally biased stretch (low complexity) spans 48-64 (SGDSLQSQSCQQQRSYS). Residues 71 to 83 (KERKPRRRNKKGR) are compositionally biased toward basic residues. The stretch at 375–451 (QAWEQQQLKE…LQGIQHRVQA (77 aa)) forms a coiled coil. Positions 491-536 (GNAEGIPRKHRSYRSFGVEMESSPQSPPKTEPTSSQPGRHPSPTLD) are disordered.

This Rattus norvegicus (Rat) protein is Testis-specific protein 10-interacting protein (Tsga10ip).